The chain runs to 130 residues: Large ribosomal subunit protein bL12 (130 aa).

The protein belongs to the bacterial ribosomal protein bL12 family. As to quaternary structure, homodimer. Part of the ribosomal stalk of the 50S ribosomal subunit. Forms a multimeric L10(L12)X complex, where L10 forms an elongated spine to which 2 to 4 L12 dimers bind in a sequential fashion. Binds GTP-bound translation factors.

Functionally, forms part of the ribosomal stalk which helps the ribosome interact with GTP-bound translation factors. Is thus essential for accurate translation. The sequence is that of Large ribosomal subunit protein bL12 from Chlamydia muridarum (strain MoPn / Nigg).